Reading from the N-terminus, the 144-residue chain is Transcriptional regulator MraZ (144 aa).

SpoVT-AbrB domains follow at residues 6 to 48 and 77 to 120; these read TYTP…PTDV and ADEG…DPVR.

Belongs to the MraZ family. In terms of assembly, forms oligomers.

The protein localises to the cytoplasm. It is found in the nucleoid. This chain is Transcriptional regulator MraZ, found in Nocardioides sp. (strain ATCC BAA-499 / JS614).